The chain runs to 955 residues: Villin-5 (955 aa).

Gelsolin-like repeat units follow at residues 29–111, 152–218, 274–339, and 644–712; these read FKPV…DKFL, VHVK…VEDG, LLHE…TVMF, and HFTQ…GSEP. Disordered regions lie at residues 741–783 and 801–895; these read KGGG…RVRV and NSRN…GLPV. Polar residues predominate over residues 756–776; that stretch reads PTYSGRSTVQDKSQRSRSMSF. Positions 817–836 are enriched in low complexity; sequence PKSATPDSSSAPSKSSATAS. Residues 842–864 are compositionally biased toward basic and acidic residues; the sequence is DRPKSVKDGSELEKPKQEEDAKE. Over residues 867–878 the composition is skewed to polar residues; the sequence is NTMTSRVESLTI. Positions 890 to 955 constitute an HP domain; the sequence is DEGLPVYPYD…NRMKIALQLF (66 aa).

It belongs to the villin/gelsolin family.

The protein resides in the cytoplasm. Its subcellular location is the cytoskeleton. Its function is as follows. Ca(2+)-regulated actin-binding protein. Binds actin microfilaments (MFs). Involved in actin filament bundling, severing and capping. Caps the barbed end of actin filaments and is able to sever them in a calcium-dependent manner. The protein is Villin-5 of Oryza sativa subsp. japonica (Rice).